Consider the following 230-residue polypeptide: Somatolactin (230 aa).

The signal sequence occupies residues 1 to 23 (MIKTKVLQAWMGIWLCAVNGLLG). Disulfide bonds link C28/C38, C87/C202, and C219/C227. An N-linked (GlcNAc...) asparagine glycan is attached at N177.

Belongs to the somatotropin/prolactin family.

The protein localises to the secreted. This Ictalurus punctatus (Channel catfish) protein is Somatolactin.